Reading from the N-terminus, the 771-residue chain is MKKQRLVLAGNGMAGIRCIEEVLKLNRHMFEIVIFGSEPHPNYNRILLSSVLQGEASLDDITLNSKDWYDKHGITLYTGETVIQIDTDQQQVITDRKRTLSYDKLIVATGSSPHILPIPGADKKGVYGFRTIEDCQALMNMAQHFQKAAVIGAGLLGLEAAVGLQHLGMDVSVIHHSAGIMQKQLDQTAARLLQTELEQKGLTFLLEKDTVSISGATKADRIHFKDGSSLKADLIVMAAGVKPNIELAVSAGIKVNRGIIVNDFMQTSEPNIYAVGECAEHNGTVYGLVAPLYEQGKALASHICGVPCEEYQGSAPSAALKIAGIDVWSAGKIQEDERTTSIKIYDEQAGVYKKALFVDDKLAGVILFGDTRDKQRLLDSLLKQRDISIAKKQIIEPETSGPLFESMPSSETICQCNTVTKGAIEDAVHTNSLTTVEEVKHCTKATGSCGGCKPLVEDLLRYMTNSEYTKPASTPSFCSCTDFTEDDIIAELQRRPFTNPAEVMNQLDWKTKNGCSTCVPAIQYYLEMLYPGFVQPEPATEETCILIPQMYGGRTNAEQLRTIANIIEAYSIPDVSITHGQRLKLSGIKPADLPNMKKDLKMPVYTNEHRHALQSIKACTCGQNRSIQQLAAQIERQLEMLPLPAPISISLSCETDCTEAALQDVGAIRTQAGWDIHIGGVRGTHARSGALFCVTENEDSTAGMIKGLIQYYRETAHYLEGVHQWIDRLGIVHIREVLFEEDLRAQLLESLQTDLSLIQNPTVETGAYKKG.

Position 43-79 (tyrosine 43–glycine 79) interacts with FAD. 4 residues coordinate [2Fe-2S] cluster: cysteine 414, cysteine 416, cysteine 449, and cysteine 452.

FAD serves as cofactor. The cofactor is [2Fe-2S] cluster.

In terms of biological role, required for nitrate assimilation. The sequence is that of Assimilatory nitrate reductase electron transfer subunit (nasB) from Bacillus subtilis (strain 168).